We begin with the raw amino-acid sequence, 253 residues long: Ubiquinone biosynthesis O-methyltransferase (253 aa).

The S-adenosyl-L-methionine site is built by arginine 45, glycine 76, aspartate 97, and methionine 140.

This sequence belongs to the methyltransferase superfamily. UbiG/COQ3 family.

It catalyses the reaction a 3-demethylubiquinol + S-adenosyl-L-methionine = a ubiquinol + S-adenosyl-L-homocysteine + H(+). The catalysed reaction is a 3-(all-trans-polyprenyl)benzene-1,2-diol + S-adenosyl-L-methionine = a 2-methoxy-6-(all-trans-polyprenyl)phenol + S-adenosyl-L-homocysteine + H(+). It functions in the pathway cofactor biosynthesis; ubiquinone biosynthesis. In terms of biological role, O-methyltransferase that catalyzes the 2 O-methylation steps in the ubiquinone biosynthetic pathway. In Parvibaculum lavamentivorans (strain DS-1 / DSM 13023 / NCIMB 13966), this protein is Ubiquinone biosynthesis O-methyltransferase.